The sequence spans 131 residues: Histone H2B.1 (131 aa).

Positions 1–19 (MSAKAEKKPASKAPAEKKP) are enriched in basic and acidic residues. Positions 1-38 (MSAKAEKKPASKAPAEKKPAAKKTSTSTDGKKRSKARK) are disordered. N6-acetyllysine; alternate is present on residues Lys7 and Lys8. Glycyl lysine isopeptide (Lys-Gly) (interchain with G-Cter in SUMO); alternate cross-links involve residues Lys7 and Lys8. Ser11 is modified (phosphoserine). Residue Lys12 is modified to N6-acetyllysine. An N6-acetyllysine; alternate mark is found at Lys17, Lys18, Lys22, and Lys23. Residues Lys17 and Lys18 each participate in a glycyl lysine isopeptide (Lys-Gly) (interchain with G-Cter in SUMO); alternate cross-link. Lys22 bears the N6-butyryllysine; alternate mark. Lys23 bears the N6-methyllysine; alternate mark. An N6-succinyllysine modification is found at Lys35. At Lys38 the chain carries N6,N6-dimethyllysine. At Lys47 the chain carries N6-succinyllysine. Lys124 is covalently cross-linked (Glycyl lysine isopeptide (Lys-Gly) (interchain with G-Cter in ubiquitin)).

The protein belongs to the histone H2B family. The nucleosome is a histone octamer containing two molecules each of H2A, H2B, H3 and H4 assembled in one H3-H4 heterotetramer and two H2A-H2B heterodimers. The octamer wraps approximately 147 bp of DNA. Post-translationally, monoubiquitinated by the RAD6/UBC2-BRE1 complex to form H2BK123ub1. H2BK123ub1 gives a specific tag for epigenetic transcriptional activation and is also prerequisite for H3K4me and H3K79me formation. H2BK123ub1 also modulates the formation of double-strand breaks during meiosis and is a prerequisite for DNA-damage checkpoint activation. Deubiquitination is performed by UBP8 in presence of SGF11. Phosphorylated by STE20 to form H2BS10ph during progression through meiotic prophase. May be correlated with chromosome condensation. H2BS10ph is also formed after H(2)O(2) treatment, and is a step leading to apoptosis. In terms of processing, acetylated by GCN5, a component of the SAGA complex, to form H2BK11ac and H2BK16ac. H2BK16ac can also be formed by ESA1, a component of the NuA4 histone acetyltransferase (HAT) complex. Acetylation of N-terminal lysines and particularly formation of H2BK11acK16ac has a positive effect on transcription. Post-translationally, sumoylation to form H2BK6su or H2BK7su, and probably also H2BK16su or H2BK17su, occurs preferentially near the telomeres and represses gene transcription.

It localises to the nucleus. It is found in the chromosome. In terms of biological role, core component of nucleosome. Nucleosomes wrap and compact DNA into chromatin, limiting DNA accessibility to the cellular machineries which require DNA as a template. Histones thereby play a central role in transcription regulation, DNA repair, DNA replication and chromosomal stability. DNA accessibility is regulated via a complex set of post-translational modifications of histones, also called histone code, and nucleosome remodeling. The polypeptide is Histone H2B.1 (HTB1) (Saccharomyces cerevisiae (strain ATCC 204508 / S288c) (Baker's yeast)).